Here is a 63-residue protein sequence, read N- to C-terminus: Large ribosomal subunit protein uL30 (63 aa).

The protein belongs to the universal ribosomal protein uL30 family. Part of the 50S ribosomal subunit.

The sequence is that of Large ribosomal subunit protein uL30 from Rickettsia typhi (strain ATCC VR-144 / Wilmington).